Here is a 317-residue protein sequence, read N- to C-terminus: Cytochrome c biogenesis protein CcsA (317 aa).

The next 7 membrane-spanning stretches (helical) occupy residues 13–35 (ISFS…HEIV), 44–64 (GMIA…IYSG), 71–91 (LYES…VPYF), 143–163 (MLLS…LLVI), 171–191 (MIGF…IKYL), 225–245 (VIGL…VWAN), and 286–306 (AIVA…VNLL).

The protein belongs to the CcmF/CycK/Ccl1/NrfE/CcsA family. As to quaternary structure, may interact with Ccs1.

Its subcellular location is the plastid. It is found in the chloroplast thylakoid membrane. Functionally, required during biogenesis of c-type cytochromes (cytochrome c6 and cytochrome f) at the step of heme attachment. The polypeptide is Cytochrome c biogenesis protein CcsA (Illicium oligandrum (Star anise)).